A 126-amino-acid chain; its full sequence is uncharacterized protein (126 aa).

An HTH hxlR-type domain is found at cysteine 20–leucine 118.

This is an uncharacterized protein from Escherichia coli (strain K12).